Here is a 135-residue protein sequence, read N- to C-terminus: MLSPKKTRFRKQHRGRMKGISSRGNYICFGRYALQALEPAWITSRQIEAGRRAMTRNVRRGGKIWVRIFPDKPVTARSTEARMGAGKGDPKYWVAVVKPGRILYEMGGVTKNIARRAISIAASKMPIRTQFIISG.

It belongs to the universal ribosomal protein uL16 family. As to quaternary structure, part of the 50S ribosomal subunit.

The protein localises to the plastid. The protein resides in the chloroplast. The polypeptide is Large ribosomal subunit protein uL16c (Jasminum nudiflorum (Winter jasmine)).